Reading from the N-terminus, the 474-residue chain is MTQKLHIKTWGCQMNEYDSSKMADLLLSTHGLELTEAPEEADVLLLNTCSIREKAQEKVFHQLGRWKELKKNNPNLVIGVGGCVASQEGEHIRHRAPYVDIIFGPQTLHRLPEMINQIRGGKSSVVDVSFPEIEKFDRLPEPRAEGPTAFVSIMEGCNKYCTFCVVPYTRGEEVSRPVDDVLFEIAQLAEQGVREVNLLGQNVNAYRGPTHDGQICSFAELLRLVASIDGIDRLRFTTSHPIEFTNDIIDVYRDTPELVSFLHLPVQAGSDRVLTMMKRGHTALEYKSIIRKLRAVRPDIQISSDFIVGFPGETAEDFEQTMNLIAQVNFDMSFSFVYSARPGTPAADMPDDVTEDEKKQRLYVLQERINQQAAQFSRRMLGTEQRVLVEGPSKKDIMELTGRTETNRIVNFQGSPEMIGKFVDVKITDVYTNSLRGEVVRTEDEMGLRIAQSPQEVMNRTRKEDELGVGRYHG.

Residues 3-120 (QKLHIKTWGC…LPEMINQIRG (118 aa)) enclose the MTTase N-terminal domain. [4Fe-4S] cluster-binding residues include Cys12, Cys49, Cys83, Cys157, Cys161, and Cys164. The Radical SAM core domain occupies 143–375 (RAEGPTAFVS…QERINQQAAQ (233 aa)). A TRAM domain is found at 378 to 441 (RRMLGTEQRV…TNSLRGEVVR (64 aa)).

The protein belongs to the methylthiotransferase family. MiaB subfamily. As to quaternary structure, monomer. It depends on [4Fe-4S] cluster as a cofactor.

The protein localises to the cytoplasm. It catalyses the reaction N(6)-dimethylallyladenosine(37) in tRNA + (sulfur carrier)-SH + AH2 + 2 S-adenosyl-L-methionine = 2-methylsulfanyl-N(6)-dimethylallyladenosine(37) in tRNA + (sulfur carrier)-H + 5'-deoxyadenosine + L-methionine + A + S-adenosyl-L-homocysteine + 2 H(+). Functionally, catalyzes the methylthiolation of N6-(dimethylallyl)adenosine (i(6)A), leading to the formation of 2-methylthio-N6-(dimethylallyl)adenosine (ms(2)i(6)A) at position 37 in tRNAs that read codons beginning with uridine. This is tRNA-2-methylthio-N(6)-dimethylallyladenosine synthase from Haemophilus influenzae (strain PittEE).